A 280-amino-acid chain; its full sequence is Octanoyltransferase LIP2p2, chloroplastic (280 aa).

A chloroplast-targeting transit peptide spans 1 to 34 (MVFSVATSSVTNPKLHHHHHLSDFNRNRVSTSLK). Residues 81 to 270 (QECSDSLIIL…EFSEVFQLQM (190 aa)) form the BPL/LPL catalytic domain. Substrate is bound by residues 123 to 130 (RGGEVTYH), 191 to 193 (AIG), and 204 to 206 (GLA). C222 acts as the Acyl-thioester intermediate in catalysis.

Belongs to the LipB family. Expressed in roots, leaves, cauline leaves, stems, siliques and flowers.

The protein localises to the plastid. Its subcellular location is the chloroplast. The enzyme catalyses octanoyl-[ACP] + L-lysyl-[protein] = N(6)-octanoyl-L-lysyl-[protein] + holo-[ACP] + H(+). Its pathway is protein modification; protein lipoylation via endogenous pathway; protein N(6)-(lipoyl)lysine from octanoyl-[acyl-carrier-protein]: step 1/2. Its function is as follows. Catalyzes the transfer of endogenously produced octanoic acid from octanoyl-acyl-carrier-protein onto the lipoyl domains of lipoate-dependent enzymes. Lipoyl-ACP can also act as a substrate although octanoyl-ACP is likely to be the physiological substrate. Together with LIP1P is essential for de novo plastidial protein lipoylation during seed development. Acts redundantly with LIP2P. The chain is Octanoyltransferase LIP2p2, chloroplastic from Arabidopsis thaliana (Mouse-ear cress).